Consider the following 315-residue polypeptide: MDARLIDGKQAAHECTARLATRVQALRAAVGTAPFLAAVLVGDDPASCTYVAAKQRALARAHLRGETHRLPAHASHAQVLELIARLNEDARVHGILIQLPLPAHLDAARVCRAVAPEKDVDGFHPLNCGALFLAQPGFVPCTPAGIVHLLRRAQVPLAGARVVIVGRSAIVGRPLAVLLASPGCDATVTLCHSHTRGLADICVQADILVAALGKARFIGAPFVRTGAVVIDVGIHHVPDATAPRGRRLCGDVDFDAVAHKVQAITPVPGGVGPMTIAMLLHNTLCAAEYAAGMIPPFRAALYADLDGRAAGDVPH.

NADP(+) contacts are provided by residues 166–168 (GRS), S193, and I234.

Belongs to the tetrahydrofolate dehydrogenase/cyclohydrolase family. In terms of assembly, homodimer.

It catalyses the reaction (6R)-5,10-methylene-5,6,7,8-tetrahydrofolate + NADP(+) = (6R)-5,10-methenyltetrahydrofolate + NADPH. The enzyme catalyses (6R)-5,10-methenyltetrahydrofolate + H2O = (6R)-10-formyltetrahydrofolate + H(+). It participates in one-carbon metabolism; tetrahydrofolate interconversion. Its function is as follows. Catalyzes the oxidation of 5,10-methylenetetrahydrofolate to 5,10-methenyltetrahydrofolate and then the hydrolysis of 5,10-methenyltetrahydrofolate to 10-formyltetrahydrofolate. This chain is Bifunctional protein FolD, found in Treponema pallidum (strain Nichols).